Reading from the N-terminus, the 355-residue chain is Anthranilate phosphoribosyltransferase (355 aa).

5-phospho-alpha-D-ribose 1-diphosphate contacts are provided by residues G102, G105–D106, S110, N112–T115, K130–S138, and S142. Residue G102 coordinates anthranilate. S114 contacts Mg(2+). An anthranilate-binding site is contributed by N133. R188 provides a ligand contact to anthranilate. Mg(2+)-binding residues include D246 and E247.

The protein belongs to the anthranilate phosphoribosyltransferase family. In terms of assembly, homodimer. It depends on Mg(2+) as a cofactor.

The enzyme catalyses N-(5-phospho-beta-D-ribosyl)anthranilate + diphosphate = 5-phospho-alpha-D-ribose 1-diphosphate + anthranilate. It functions in the pathway amino-acid biosynthesis; L-tryptophan biosynthesis; L-tryptophan from chorismate: step 2/5. Functionally, catalyzes the transfer of the phosphoribosyl group of 5-phosphorylribose-1-pyrophosphate (PRPP) to anthranilate to yield N-(5'-phosphoribosyl)-anthranilate (PRA). This Pectobacterium carotovorum subsp. carotovorum (strain PC1) protein is Anthranilate phosphoribosyltransferase.